A 589-amino-acid chain; its full sequence is WD repeat-containing protein 26 homolog (589 aa).

The disordered stretch occupies residues 1–57 (MGVVEDTEPPLKRAKRLADEPNGFSANSSVRGSSVNSNSLGDLMARPLPSQGDDETI). Residues 25-39 (SANSSVRGSSVNSNS) show a composition bias toward low complexity. The region spanning 64-96 (RKSEFVRIITRALYSLGYDKTGAMLEEESGISL) is the LisH domain. Residues 97 to 154 (HNSTIKLFLQQVKDGKWDQSVKTLHRIGFPDEKAVKAASFLLLEQKFLEFLKVEKIAD) form the CTLH domain. 7 WD repeats span residues 272-311 (SHTDEVWFLQFSHNGKYLASSSKDQTAIIWEISADGHISL), 317-358 (GHHK…HMYE), 360-398 (GGISPISCGWYPDGQGIIAGMTDRSICMWDLDGREKECW), 401-440 (QRTQKVSDIAMTDDGKWLVSVCKDSVISLFDREATVERLI), 442-480 (EEDMITSFSLSNDNKYILVNLLNQEIRLWNIEGDPKIVS), 484-526 (GHKR…LIVE), and 529-569 (GHAG…QQNQ).

In terms of assembly, interacts with RANBPM. In terms of tissue distribution, expressed in roots, leaves and flowers.

It is found in the cytoplasm. Functionally, acts as a component involved in the crosstalk regulation between light, hormone and abiotic stress response. In Arabidopsis thaliana (Mouse-ear cress), this protein is WD repeat-containing protein 26 homolog.